Reading from the N-terminus, the 288-residue chain is Thymidylate synthase (288 aa).

DUMP contacts are provided by residues Arg21 and 150–151 (RR). Cys170 serves as the catalytic Nucleophile. Residues 191-194 (RSGD), Asn202, and 232-234 (HIY) contribute to the dUMP site. Asp194 contacts (6R)-5,10-methylene-5,6,7,8-tetrahydrofolate. Ala287 contributes to the (6R)-5,10-methylene-5,6,7,8-tetrahydrofolate binding site.

Belongs to the thymidylate synthase family. Bacterial-type ThyA subfamily. Homodimer.

The protein resides in the cytoplasm. The enzyme catalyses dUMP + (6R)-5,10-methylene-5,6,7,8-tetrahydrofolate = 7,8-dihydrofolate + dTMP. It functions in the pathway pyrimidine metabolism; dTTP biosynthesis. Catalyzes the reductive methylation of 2'-deoxyuridine-5'-monophosphate (dUMP) to 2'-deoxythymidine-5'-monophosphate (dTMP) while utilizing 5,10-methylenetetrahydrofolate (mTHF) as the methyl donor and reductant in the reaction, yielding dihydrofolate (DHF) as a by-product. This enzymatic reaction provides an intracellular de novo source of dTMP, an essential precursor for DNA biosynthesis. The chain is Thymidylate synthase from Mesoplasma florum (strain ATCC 33453 / NBRC 100688 / NCTC 11704 / L1) (Acholeplasma florum).